Here is a 56-residue protein sequence, read N- to C-terminus: Alpha-pompilidotoxin (56 aa).

The signal sequence occupies residues 1-22 (MFKQLILLALAAVFLLINISSA). A propeptide spanning residues 23-42 (EPAAEPNANAEPLAEASAEP) is cleaved from the precursor. A Leucine amide modification is found at leucine 55.

As to expression, expressed by the venom gland.

The protein localises to the secreted. In terms of biological role, inhibits sodium channels (Nav) inactivation. Shows two types of inhibitory activities on channels. Inhibition of hNav1.6/SCN8A shows a large increase in the steady-state current component without any increase in the slow component, whereas inhibition of hNav1.1/SCN1A, hNav1.2/SCN2A, hNav1.3/SCN3A and hNav1.7/SCN9A shows a large increase in the slow component with only a small steady-state component. Is 5-fold less potent than beta-PMTX for inducing repetitive action potentials in lobster neuromuscular junctions. In Anoplius samariensis (Solitary wasp), this protein is Alpha-pompilidotoxin.